A 595-amino-acid chain; its full sequence is ATP-dependent lipid A-core flippase (595 aa).

The disordered stretch occupies residues 1-20 (MSQAYQPDSTKTSAKKSSAV). Over residues 9–19 (STKTSAKKSSA) the composition is skewed to low complexity. 4 helical membrane-spanning segments follow: residues 41-61 (WWAI…EIWI), 81-101 (GLFP…SFLG), 169-189 (VIAL…ILFV), and 266-286 (INTP…VWLA). In terms of domain architecture, ABC transmembrane type-1 spans 45-326 (LLTITGFAIN…LTDVNQQLQR (282 aa)). Positions 357-592 (IKLDNISLVY…HGHYAQMYAR (236 aa)) constitute an ABC transporter domain. 390 to 397 (GRSGAGKS) is a binding site for ATP.

Belongs to the ABC transporter superfamily. Lipid exporter (TC 3.A.1.106) family. As to quaternary structure, homodimer.

The protein resides in the cell inner membrane. The catalysed reaction is ATP + H2O + lipid A-core oligosaccharideSide 1 = ADP + phosphate + lipid A-core oligosaccharideSide 2.. Involved in lipopolysaccharide (LPS) biosynthesis. Translocates lipid A-core from the inner to the outer leaflet of the inner membrane. Transmembrane domains (TMD) form a pore in the inner membrane and the ATP-binding domain (NBD) is responsible for energy generation. In Psychrobacter arcticus (strain DSM 17307 / VKM B-2377 / 273-4), this protein is ATP-dependent lipid A-core flippase.